Here is a 795-residue protein sequence, read N- to C-terminus: Phenylalanine--tRNA ligase beta subunit (795 aa).

The 110-residue stretch at Ala-39 to Arg-148 folds into the tRNA-binding domain. The B5 domain occupies Pro-401–Asn-476. 4 residues coordinate Mg(2+): Asp-454, Asp-460, Glu-463, and Glu-464. The FDX-ACB domain maps to Ser-701–Arg-794.

It belongs to the phenylalanyl-tRNA synthetase beta subunit family. Type 1 subfamily. Tetramer of two alpha and two beta subunits. The cofactor is Mg(2+).

The protein resides in the cytoplasm. The catalysed reaction is tRNA(Phe) + L-phenylalanine + ATP = L-phenylalanyl-tRNA(Phe) + AMP + diphosphate + H(+). The polypeptide is Phenylalanine--tRNA ligase beta subunit (pheT) (Pasteurella multocida (strain Pm70)).